Here is a 414-residue protein sequence, read N- to C-terminus: Gamma-glutamyl phosphate reductase (414 aa).

It belongs to the gamma-glutamyl phosphate reductase family.

It localises to the cytoplasm. The enzyme catalyses L-glutamate 5-semialdehyde + phosphate + NADP(+) = L-glutamyl 5-phosphate + NADPH + H(+). The protein operates within amino-acid biosynthesis; L-proline biosynthesis; L-glutamate 5-semialdehyde from L-glutamate: step 2/2. Catalyzes the NADPH-dependent reduction of L-glutamate 5-phosphate into L-glutamate 5-semialdehyde and phosphate. The product spontaneously undergoes cyclization to form 1-pyrroline-5-carboxylate. The sequence is that of Gamma-glutamyl phosphate reductase from Xanthomonas oryzae pv. oryzae (strain KACC10331 / KXO85).